We begin with the raw amino-acid sequence, 4138 residues long: Fumosorinone synthetase (4138 aa).

Positions 15 to 455 (PEPIAIVGSA…GTNAHAIIER (441 aa)) constitute a Ketosynthase family 3 (KS3) domain. Catalysis depends on for beta-ketoacyl synthase activity residues Cys189, His328, and His375. Residues 590 to 921 (VFTGQGAQWP…APDAVSFSTA (332 aa)) are malonyl-CoA:ACP transacylase (MAT) domain. The segment at 990–1133 (HELLGRRAVD…GLIDVHLGPR (144 aa)) is N-terminal hotdog fold. The tract at residues 990-1306 (HELLGRRAVD…GFEVRSVGER (317 aa)) is dehydratase (DH) domain. Positions 990–1309 (HELLGRRAVD…VRSVGERDAA (320 aa)) constitute a PKS/mFAS DH domain. His1022 (proton acceptor; for dehydratase activity) is an active-site residue. The tract at residues 1157–1309 (LQEIDCEKLY…VRSVGERDAA (153 aa)) is C-terminal hotdog fold. Asp1216 functions as the Proton donor; for dehydratase activity in the catalytic mechanism. The methyltransferase (MT) domain stretch occupies residues 1456–1650 (RFYAEDKGMQ…FSGADHVAHD (195 aa)). The segment at 2205–2379 (TYLMVGAAGG…AASIIHVGFV (175 aa)) is ketoreductase (KR) domain. Positions 2507–2587 (EAAAAVRRAF…QLSTLAAKLA (81 aa)) constitute a Carrier 1 domain. An O-(pantetheine 4'-phosphoryl)serine modification is found at Ser2547. Residues 2587 to 2683 (ARQQSPRKEG…TEPKTEDKVS (97 aa)) are disordered. Over residues 2610–2621 (TQDKLVDDKEQK) the composition is skewed to basic and acidic residues. The segment covering 2622-2643 (VQVTSSLAKADSLTQEMQASAH) has biased composition (polar residues). Residues 2647-2659 (DSATNPTPSSTAS) are compositionally biased toward low complexity. The segment covering 2664 to 2675 (SNSQSTRSTSTE) has biased composition (polar residues). The condensation (C) domain stretch occupies residues 2701–3128 (REAPMSAAQA…ASQRVRECAV (428 aa)). The tract at residues 3162–3564 (CQKNSARTAI…DGTLLCFGRI (403 aa)) is adenylation (A) (KR) domain. The region spanning 3680 to 3759 (EKMTIQEGEL…GMTRCVLAQR (80 aa)) is the Carrier 2 domain. An O-(pantetheine 4'-phosphoryl)serine modification is found at Ser3719. Positions 3813–4045 (LTGATGFLGG…LDFGTVDAVV (233 aa)) are reductase (RED) domain.

This sequence in the C-terminal section; belongs to the NRP synthetase family.

Functionally, hybrid PKS-NRPS synthetase; part of the gene cluster that mediates the biosynthesis of fumosorinone, a 2-pyridone alkaloid that acts as an inhibitor of protein tyrosine phosphatase 1B which is implicated asa negative regulator of insulin receptor signaling and a potential drug target for the treatment of type II diabetes and other associated metabolic syndromes. The polyketide-amino acid backbone of fumosorinone is first assembled by the PKS-NRPS hybrid fumoS. The PKS modules condense one acetyl-CoA starter unit with 7 malonyl-CoA units, programmed C-methylations occurring after the first 3 and the sixth extensions, and cycles of full reduction occurring after the first 2 extensions. Because fumoS lacks a designated enoyl reductase (ER) domain, the required activity is provided the enoyl reductase fumoC. Upon formation of the polyketide backbone on the thiotemplate, the polyketide is transferred to the NRPS module and linked to tyrosine to produce the acyltetramic acid intermediate called prefumosorinone A. The cytochrome P450 monooxygenase fumoA then probably catalyzes an unprecedented oxidative ring expansion of prefumosorinone A to form prefumosorinone B which contains the 2-pyridone core of fumosorinone. The cytochrome P450 monooxygenase fumoB might hydroxylate the nitrogen of prefumosorinone B, but not the acyltetramic acid prefumosorinone A, to form fumosorinone. The protein is Fumosorinone synthetase of Cordyceps fumosorosea (strain ARSEF 2679) (Isaria fumosorosea).